A 442-amino-acid polypeptide reads, in one-letter code: Tyrosine-protein kinase transforming protein RYK (442 aa).

The Protein kinase domain maps to 45-316 (LSLGKVLGEG…QLKVHLEKLL (272 aa)). ATP is bound by residues 51-59 (LGEGEFGSV) and Lys77. Asp181 functions as the Proton acceptor in the catalytic mechanism. The residue at position 212 (Tyr212) is a Phosphotyrosine; by autocatalysis.

This sequence belongs to the protein kinase superfamily. Tyr protein kinase family. AXL/UFO subfamily.

It localises to the host cell membrane. It carries out the reaction L-tyrosyl-[protein] + ATP = O-phospho-L-tyrosyl-[protein] + ADP + H(+). The protein is Tyrosine-protein kinase transforming protein RYK (V-RYK) of Avian retrovirus RPL30.